The sequence spans 628 residues: Basal cell adhesion molecule (628 aa).

The first 31 residues, 1 to 31, serve as a signal peptide directing secretion; sequence MEPPDAPAQARGAPRLLLLAVLLAAHPDAQA. 2 consecutive Ig-like V-type domains span residues 32–142 and 147–257; these read EVRL…ARLN and PEAT…PTFH. The Extracellular segment spans residues 32–547; sequence EVRLSVPPLV…GTVSPQTSQA (516 aa). 3 cysteine pairs are disulfide-bonded: C53/C125, C172/C237, and C291/C337. Ig-like C2-type domains are found at residues 274-355, 363-441, and 448-541; these read PSTP…KTLE, PLEL…QNFT, and PELK…GTVS. Residues 309–312 form an interaction with laminin alpha5 region; sequence EQEE. N-linked (GlcNAc...) asparagine glycosylation is found at N321, N377, N383, N419, and N439. C384 and C424 are oxidised to a cystine. The cysteines at positions 473 and 522 are disulfide-linked. The helical transmembrane segment at 548–568 threads the bilayer; it reads GVAVMAVAVSVGLLLLVVAVF. At 569–628 the chain is on the cytoplasmic side; sequence YCVRRKGGPCCRQRREKGAPPPGEPGLSHSGSEQPEQTGLLMGGASGGARGGSGGFGDEC. The disordered stretch occupies residues 579-628; the sequence is CRQRREKGAPPPGEPGLSHSGSEQPEQTGLLMGGASGGARGGSGGFGDEC. S596 is subject to Phosphoserine; by GSK3. S598 carries the post-translational modification Phosphoserine; by CK2. A Phosphoserine modification is found at S600. The segment covering 609-628 has biased composition (gly residues); sequence LMGGASGGARGGSGGFGDEC. Phosphoserine; by PKA or PKB/AKT1 is present on S621.

As to quaternary structure, homodimer. Interacts with ITGA4:ITGB1. Interacts with spectrins SPTA1 and SPTB1. Post-translationally, epinephrine-stimulated phosphorylation of Ser-621 by PKA enhances adhesion to laminin. Ser-621 can also be phosphorylated by AKT1. In terms of tissue distribution, wide tissue distribution (highest in the pancreas and very low in brain). Closely associated with the basal layer of cells in epithelia and the endothelium of blood vessel walls.

It localises to the cell membrane. In terms of biological role, transmembrane glycoprotein that functions as both a receptor and an adhesion molecule playing a crucial role in cell adhesion, motility, migration and invasion. Extracellular domain enables binding to extracellular matrix proteins, such as laminin, integrin and other ligands while its intracellular domain interacts with cytoskeletal proteins like hemoglobin, facilitating cell signal transduction. Serves as a receptor for laminin alpha-5/LAMA5 to promote cell adhesion. Mechanistically, JAK2 induces BCAM phosphorylation and activates its adhesion to laminin by stimulating a Rap1/AKT signaling pathway in the absence of EPOR. This Homo sapiens (Human) protein is Basal cell adhesion molecule (BCAM).